Reading from the N-terminus, the 138-residue chain is Basic leucine zipper 8 (138 aa).

A disordered region spans residues 30 to 67 (NLPATSDDSSRTAEDNERKRRRKVSNRESARRSRMRKQ). Positions 37-47 (DSSRTAEDNER) are enriched in basic and acidic residues. A bZIP domain is found at 45–108 (NERKRRRKVS…EKVIEENMKL (64 aa)). The basic motif stretch occupies residues 47 to 68 (RKRRRKVSNRESARRSRMRKQR). The Nuclear localization signal motif lies at 48 to 55 (KRRRKVSN). A leucine-zipper region spans residues 73–87 (LWSMLVQLINKNKSL).

This sequence belongs to the bZIP family. As to quaternary structure, homodimer.

The protein localises to the nucleus. In Arabidopsis thaliana (Mouse-ear cress), this protein is Basic leucine zipper 8.